Consider the following 1678-residue polypeptide: Clathrin heavy chain (1678 aa).

7 WD40-like repeat regions span residues 24-67 (SFSF…RPIS), 68-107 (ADSA…MNED), 108-149 (VVFW…SSLN), 150-195 (GCQI…QAIE), 196-257 (GHAA…PEAQ), 258-301 (NDFP…ISAD), and 302-330 (TIFV…VTVD). 7 CHCR repeats span residues 538 to 684 (VAEE…QICV), 687 to 829 (ATKY…SEDI), 834 to 973 (ILVV…QLID), 980 to 1125 (LSET…VKEA), 1129 to 1270 (YIKA…FRLA), 1275 to 1421 (LHIV…LLLN), and 1424 to 1567 (LLVL…YDCF). The interval 1334–1643 (REHLELFWSR…IQMEPQLMIT (310 aa)) is involved in binding clathrin light chain. Residues 1552 to 1677 (EELLGWFLER…AGGRNMGYPY (126 aa)) form a trimerization region.

It belongs to the clathrin heavy chain family. As to quaternary structure, clathrin triskelions, composed of 3 heavy chains and 3 light chains, are the basic subunits of the clathrin coat. Interacts with sau.

Its subcellular location is the cytoplasmic vesicle membrane. The protein resides in the membrane. It localises to the coated pit. Functionally, clathrin is the major protein of the polyhedral coat of coated pits and vesicles. The chain is Clathrin heavy chain (Chc) from Drosophila melanogaster (Fruit fly).